The chain runs to 193 residues: PXMP2/4 family protein 2 (193 aa).

Transmembrane regions (helical) follow at residues 56–78 (VATM…YRSL), 96–116 (IDQL…TNFI), 132–152 (LFYA…INFS), and 160–180 (VLYS…ISFD).

The protein belongs to the peroxisomal membrane protein PXMP2/4 family.

The protein localises to the membrane. In Dictyostelium discoideum (Social amoeba), this protein is PXMP2/4 family protein 2.